Here is a 309-residue protein sequence, read N- to C-terminus: 4-hydroxy-3-methylbut-2-enyl diphosphate reductase (309 aa).

Cys-12 provides a ligand contact to [4Fe-4S] cluster. Positions 41 and 74 each coordinate (2E)-4-hydroxy-3-methylbut-2-enyl diphosphate. His-41 and His-74 together coordinate dimethylallyl diphosphate. Isopentenyl diphosphate is bound by residues His-41 and His-74. Cys-96 provides a ligand contact to [4Fe-4S] cluster. His-124 is a (2E)-4-hydroxy-3-methylbut-2-enyl diphosphate binding site. His-124 contacts dimethylallyl diphosphate. His-124 contributes to the isopentenyl diphosphate binding site. Glu-126 (proton donor) is an active-site residue. (2E)-4-hydroxy-3-methylbut-2-enyl diphosphate is bound at residue Thr-167. Cys-197 contacts [4Fe-4S] cluster. Residues Ser-225, Ser-226, Asn-227, and Ser-269 each contribute to the (2E)-4-hydroxy-3-methylbut-2-enyl diphosphate site. Residues Ser-225, Ser-226, Asn-227, and Ser-269 each contribute to the dimethylallyl diphosphate site. Isopentenyl diphosphate-binding residues include Ser-225, Ser-226, Asn-227, and Ser-269.

It belongs to the IspH family. Requires [4Fe-4S] cluster as cofactor.

It carries out the reaction isopentenyl diphosphate + 2 oxidized [2Fe-2S]-[ferredoxin] + H2O = (2E)-4-hydroxy-3-methylbut-2-enyl diphosphate + 2 reduced [2Fe-2S]-[ferredoxin] + 2 H(+). It catalyses the reaction dimethylallyl diphosphate + 2 oxidized [2Fe-2S]-[ferredoxin] + H2O = (2E)-4-hydroxy-3-methylbut-2-enyl diphosphate + 2 reduced [2Fe-2S]-[ferredoxin] + 2 H(+). It functions in the pathway isoprenoid biosynthesis; dimethylallyl diphosphate biosynthesis; dimethylallyl diphosphate from (2E)-4-hydroxy-3-methylbutenyl diphosphate: step 1/1. Its pathway is isoprenoid biosynthesis; isopentenyl diphosphate biosynthesis via DXP pathway; isopentenyl diphosphate from 1-deoxy-D-xylulose 5-phosphate: step 6/6. In terms of biological role, catalyzes the conversion of 1-hydroxy-2-methyl-2-(E)-butenyl 4-diphosphate (HMBPP) into a mixture of isopentenyl diphosphate (IPP) and dimethylallyl diphosphate (DMAPP). Acts in the terminal step of the DOXP/MEP pathway for isoprenoid precursor biosynthesis. The protein is 4-hydroxy-3-methylbut-2-enyl diphosphate reductase of Pseudoalteromonas translucida (strain TAC 125).